Reading from the N-terminus, the 440-residue chain is Chromosome partition protein MukF (440 aa).

A leucine-zipper region spans residues 208–236 (LSETSGTLRELQDTLEAAGDKLQANLLRI).

Belongs to the MukF family. Interacts, and probably forms a ternary complex, with MukE and MukB via its C-terminal region. The complex formation is stimulated by calcium or magnesium. It is required for an interaction between MukE and MukB.

The protein localises to the cytoplasm. It localises to the nucleoid. Its function is as follows. Involved in chromosome condensation, segregation and cell cycle progression. May participate in facilitating chromosome segregation by condensation DNA from both sides of a centrally located replisome during cell division. Not required for mini-F plasmid partitioning. Probably acts via its interaction with MukB and MukE. Overexpression results in anucleate cells. It has a calcium binding activity. This is Chromosome partition protein MukF from Salmonella agona (strain SL483).